The chain runs to 433 residues: Oxaloacetate decarboxylase beta chain 2 (433 aa).

10 helical membrane passes run 16 to 36 (LGAG…LAIA), 42 to 62 (LLLL…AGMA), 122 to 142 (VLAL…VIFM), 168 to 188 (FGIF…LIAF), 190 to 210 (LPQA…AIYL), 216 to 236 (PELL…VPLI), 266 to 286 (ILFP…AAPL), 311 to 331 (NGLI…KLVA), 340 to 360 (LGIL…GVLM), and 413 to 433 (VAGV…VLAM).

The protein belongs to the GcdB/MmdB/OadB family. As to quaternary structure, heterotrimer of an alpha, a beta and a gamma subunit. It depends on Na(+) as a cofactor.

The protein localises to the cell membrane. It carries out the reaction oxaloacetate + 2 Na(+)(in) + H(+) = pyruvate + 2 Na(+)(out) + CO2. Functionally, catalyzes the decarboxylation of oxaloacetate coupled to Na(+) translocation. The sequence is that of Oxaloacetate decarboxylase beta chain 2 (oadB2) from Salmonella typhi.